A 289-amino-acid polypeptide reads, in one-letter code: ATP synthase mitochondrial F1 complex assembly factor 2 (289 aa).

Residues Met-1–Tyr-40 constitute a mitochondrion transit peptide. Lys-133 bears the N6-succinyllysine mark.

The protein belongs to the ATP12 family. Interacts with ATP5F1B; involved in the assembly of the F1 component of the mitochondrial ATP synthase (ATPase). Interacts with FMC1.

It is found in the mitochondrion inner membrane. Functionally, plays a role in the assembly of the F1 component of the mitochondrial ATP synthase (ATPase). This Bos taurus (Bovine) protein is ATP synthase mitochondrial F1 complex assembly factor 2 (ATPAF2).